A 239-amino-acid chain; its full sequence is DnaA regulatory inactivator Hda (239 aa).

The protein belongs to the DnaA family. HdA subfamily. In terms of assembly, the active form seems to be an ADP-bound monomer. Forms the RIDA complex (regulatory inactivation of DnaA) of ATP-DnaA, ADP-Hda and the DNA-loaded beta sliding clamp (dnaN).

Mediates the interaction of DNA replication initiator protein DnaA with DNA polymerase subunit beta sliding clamp (dnaN). Stimulates hydrolysis of ATP-DnaA to ADP-DnaA, rendering DnaA inactive for reinitiation, a process called regulatory inhibition of DnaA or RIDA. This Yersinia pseudotuberculosis serotype O:1b (strain IP 31758) protein is DnaA regulatory inactivator Hda.